The sequence spans 681 residues: Rabphilin-3A (681 aa).

A disordered region spans residues Met1–Asp21. The RabBD domain occupies Gln40–Gly157. The segment at Gly88–Glu145 adopts an FYVE-type zinc-finger fold. Zn(2+)-binding residues include Cys94, Cys97, Cys111, Cys114, Cys119, Cys122, Cys137, and Cys140. Residues Val162–Asp375 form a disordered region. Residues Ala199–Pro208 show a composition bias toward basic and acidic residues. Arg223 carries the post-translational modification Omega-N-methylarginine. A compositionally biased stretch (basic and acidic residues) spans Arg243 to His252. Ser271 bears the Phosphoserine mark. Positions Ala278–Pro296 are enriched in pro residues. Residues Ala347–Ala356 are compositionally biased toward low complexity. Residues Ala362–Asp375 show a composition bias toward acidic residues. In terms of domain architecture, C2 1 spans Thr379–Ile501. Positions 409, 410, 416, 471, 472, 473, 479, 526, 568, 574, 628, 629, 630, and 636 each coordinate Ca(2+). The region spanning Glu537–His670 is the C2 2 domain. Phosphoserine is present on residues Ser679 and Ser680.

As to quaternary structure, interacts with RAB3B, RAB3C, RAB3D, RAB8A, RAB27A and RAB27B. Interacts with RAB3A; this interaction recruits RPH3A to synaptic vesicules. Interacts (via C2B domain) with SNAP25. Interacts with deubiquitinating enzyme CAND1; this interaction results in the deubiquitination of RPH3A. Interacts with GRIN2A and DLG4; this ternary complex regulates NMDA receptor composition at postsynaptic membranes. Interacts with SNCA. It depends on Ca(2+) as a cofactor. In terms of processing, ubiquitinated. Deubiquitinated by CAND1 to prevent its degradation. Specifically expressed in brain.

It is found in the cytoplasmic vesicle. The protein resides in the secretory vesicle. Its subcellular location is the synaptic vesicle membrane. It localises to the cell projection. The protein localises to the dendritic spine. It is found in the postsynaptic cell membrane. The protein resides in the membrane. In terms of biological role, plays an essential role in docking and fusion steps of regulated exocytosis. At the presynaptic level, RPH3A is recruited by RAB3A to the synaptic vesicle membrane in a GTP-dependent manner where it modulates synaptic vesicle trafficking and calcium-triggered neurotransmitter release. In the post-synaptic compartment, forms a ternary complex with GRIN2A and DLG4 and regulates NMDA receptor stability. Also plays a role in the exocytosis of arginine vasopressin hormone. The protein is Rabphilin-3A (Rph3a) of Mus musculus (Mouse).